Consider the following 857-residue polypeptide: MDSRNQLIVAILLTSACLIYCAQYVTVFYGIPAWKNASIPLFCATRNRDTWGTIQCLPDNDDYQEIPLNVTEAFDAWNNTVTEQAVEDVWNLFETSVKPCVKLTPLCVQMECNSTSTESSNSTSEGSTVPEILNETTSCITNNSCSDLGSEEVVDCRFNMTGLQLDKPQQYSETWYSKDVVCDTTNGTSRKCYMNHCNTSVITESCDKHYWDAMRFRYCAPPGLCLLRCNDTNYSGFEPKCPKVVAATCTRMMETQTSTWFGFNGTRAENRTYIYWHGRDNRTIISLNTHYNLTMHCKRPGNKSVLPITLRSGRVFHSRPIINERPKQAWCWFGGDWKKAMQEVKQTLVKHPRYRGTNDTQKINFTQPGKGSDAEVVYMWTNCRGEFLYCNMTRFLNWIENRAHPQRNYAPCHIRQIINTWHRVGQNIYLPPREGELVCNSTVTSIIANIDMFDNQTSITFSAEVAELYRLELGDYKLVEITPIGFAPTSEKRYSSAPQRNKRGVFVLGVLGFLATAGSAMGAASLTLSAHPGLYWAGIVQQQQQLLDVVKRQQEMLRLTVWGTKNLQTRVTAIEKYLRDQARLNSWGCAFRQVCYTTVLWENNSIVPDWNNMTWQEWEQQTRDLEANISRSLEQAQIQQEKNMYELQKLNSWDVFGNWFDLTSWIKYIQYGVYVIIGIIALRIVIYVVQLLSRLRKGYRPVFSSPPGYIQQIHIHKDWEQPDREETDEDAGNSIGDSSWPWPIAYIHFLIRQLIRLLTGLYSVCKDLLSRSFPTLQLIFQSLQRALTTIRDWLRLTIAYLQYGCEWIQEVLQVLARTTRETLASAWRDLWGAMGRIGRGILAVPRRIRQGAELALL.

The signal sequence occupies residues Met1–Ala22. Residues Gln23–Tyr671 are Extracellular-facing. The N-linked (GlcNAc...) asparagine; by host glycan is linked to Asn36. Residues Cys43 and Cys56 are joined by a disulfide bond. Residues Asn69, Asn78, Asn113, Asn121, Asn134, Asn142, Asn159, Asn186, Asn198, Asn230, Asn233, Asn264, Asn270, Asn281, Asn292, Asn302, Asn358, Asn364, Asn391, Asn440, and Asn455 are each glycosylated (N-linked (GlcNAc...) asparagine; by host). Intrachain disulfides connect Cys100/Cys206, Cys107/Cys197, Cys112/Cys156, Cys219/Cys249, and Cys229/Cys241. Residues Cys112–Asp155 form a V1 region. Positions Cys156–Cys197 are V2. The segment at Cys297–Trp330 is V3. An intrachain disulfide couples Cys297 to Cys331. 2 cysteine pairs are disulfide-bonded: Cys383-Cys439 and Cys390-Cys412. Residues Cys390–Cys412 form a V4 region. Residues Asp454–Phe461 are V5. Positions Gly504 to Ala524 are fusion peptide. An immunosuppression region spans residues Leu567–Arg583. 3 N-linked (GlcNAc...) asparagine; by host glycosylation sites follow: Asn603, Asn612, and Asn628. Residues Gln616–Met644 are a coiled coil. The interval Lys649 to Gln670 is MPER; binding to GalCer. The chain crosses the membrane as a helical span at residues Gly672–Leu692. The Cytoplasmic portion of the chain corresponds to Ser693–Leu857. Residues Tyr699–Val702 carry the YXXV motif; contains endocytosis signal motif. Cys765 carries the S-palmitoyl cysteine; by host lipid modification. Positions Leu856–Leu857 match the Di-leucine internalization motif motif.

The mature envelope protein (Env) consists of a homotrimer of non-covalently associated gp120-gp41 heterodimers. The resulting complex protrudes from the virus surface as a spike. There seems to be as few as 10 spikes on the average virion. Interacts with human CD4, CCR5 and CXCR4, to form a P4HB/PDI-CD4-CXCR4-gp120 complex. Gp120 also interacts with the C-type lectins CD209/DC-SIGN and CLEC4M/DC-SIGNR (collectively referred to as DC-SIGN(R)). Gp120 and gp41 interact with GalCer. As to quaternary structure, the mature envelope protein (Env) consists of a homotrimer of non-covalently associated gp120-gp41 heterodimers. The resulting complex protrudes from the virus surface as a spike. There seems to be as few as 10 spikes on the average virion. Specific enzymatic cleavages in vivo yield mature proteins. Envelope glycoproteins are synthesized as an inactive precursor that is heavily N-glycosylated and processed likely by host cell furin in the Golgi to yield the mature SU and TM proteins. The cleavage site between SU and TM requires the minimal sequence [KR]-X-[KR]-R. In terms of processing, palmitoylation of the transmembrane protein and of Env polyprotein (prior to its proteolytic cleavage) is essential for their association with host cell membrane lipid rafts. Palmitoylation is therefore required for envelope trafficking to classical lipid rafts, but not for viral replication.

It localises to the virion membrane. Its subcellular location is the host cell membrane. The protein localises to the host endosome membrane. Its function is as follows. The surface protein gp120 (SU) attaches the virus to the host lymphoid cell by binding to the primary receptor CD4. This interaction induces a structural rearrangement creating a high affinity binding site for a chemokine coreceptor like CXCR4 and/or CCR5. This peculiar 2 stage receptor-interaction strategy allows gp120 to maintain the highly conserved coreceptor-binding site in a cryptic conformation, protected from neutralizing antibodies. Since CD4 also displays a binding site for the disulfide-isomerase P4HB/PDI, a P4HB/PDI-CD4-CXCR4-gp120 complex may form. In that complex, P4HB/PDI could reach and reduce gp120 disulfide bonds, causing major conformational changes in gp120. TXN, another PDI family member could also be involved in disulfide rearrangements in Env during fusion. These changes are transmitted to the transmembrane protein gp41 and are thought to activate its fusogenic potential by unmasking its fusion peptide. In terms of biological role, the surface protein gp120 is a ligand for CD209/DC-SIGN and CLEC4M/DC-SIGNR, which are respectively found on dendritic cells (DCs), and on endothelial cells of liver sinusoids and lymph node sinuses. These interactions allow capture of viral particles at mucosal surfaces by these cells and subsequent transmission to permissive cells. DCs are professional antigen presenting cells, critical for host immunity by inducing specific immune responses against a broad variety of pathogens. They act as sentinels in various tissues where they take up antigen, process it, and present it to T-cells following migration to lymphoid organs. HIV subverts the migration properties of dendritic cells to gain access to CD4+ T-cells in lymph nodes. Virus transmission to permissive T-cells occurs either in trans (without DCs infection, through viral capture and transmission), or in cis (following DCs productive infection, through the usual CD4-gp120 interaction), thereby inducing a robust infection. In trans infection, bound virions remain infectious over days and it is proposed that they are not degraded, but protected in non-lysosomal acidic organelles within the DCs close to the cell membrane thus contributing to the viral infectious potential during DCs' migration from the periphery to the lymphoid tissues. On arrival at lymphoid tissues, intact virions recycle back to DCs' cell surface allowing virus transmission to CD4+ T-cells. Virion capture also seems to lead to MHC-II-restricted viral antigen presentation, and probably to the activation of HIV-specific CD4+ cells. The transmembrane protein gp41 (TM) acts as a class I viral fusion protein. Under the current model, the protein has at least 3 conformational states: pre-fusion native state, pre-hairpin intermediate state, and post-fusion hairpin state. During fusion of viral and target intracellular membranes, the coiled coil regions (heptad repeats) assume a trimer-of-hairpins structure, positioning the fusion peptide in close proximity to the C-terminal region of the ectodomain. The formation of this structure appears to drive apposition and subsequent fusion of viral and target cell membranes. Complete fusion occurs in host cell endosomes and is dynamin-dependent, however some lipid transfer might occur at the plasma membrane. The virus undergoes clathrin-dependent internalization long before endosomal fusion, thus minimizing the surface exposure of conserved viral epitopes during fusion and reducing the efficacy of inhibitors targeting these epitopes. Membranes fusion leads to delivery of the nucleocapsid into the cytoplasm. Functionally, the envelope glycoprotein gp160 precursor down-modulates cell surface CD4 antigen by interacting with it in the endoplasmic reticulum and blocking its transport to the cell surface. Its function is as follows. The gp120-gp41 heterodimer seems to contribute to T-cell depletion during HIV-1 infection. The envelope glycoproteins expressed on the surface of infected cells induce apoptosis through an interaction with uninfected cells expressing the receptor (CD4) and the coreceptors CXCR4 or CCR5. This type of bystander killing may be obtained by at least three distinct mechanisms. First, the interaction between the 2 cells can induce cellular fusion followed by nuclear fusion within the syncytium. Syncytia are condemned to die from apoptosis. Second, the 2 interacting cells may not fuse entirely and simply exchange plasma membrane lipids, after a sort of hemifusion process, followed by rapid death. Third, it is possible that virus-infected cells, on the point of undergoing apoptosis, fuse with CD4-expressing cells, in which case apoptosis is rapidly transmitted from one cell to the other and thus occurs in a sort of contagious fashion. In terms of biological role, the gp120-gp41 heterodimer allows rapid transcytosis of the virus through CD4 negative cells such as simple epithelial monolayers of the intestinal, rectal and endocervical epithelial barriers. Both gp120 and gp41 specifically recognize glycosphingolipids galactosyl-ceramide (GalCer) or 3' sulfo-galactosyl-ceramide (GalS) present in the lipid rafts structures of epithelial cells. Binding to these alternative receptors allows the rapid transcytosis of the virus through the epithelial cells. This transcytotic vesicle-mediated transport of virions from the apical side to the basolateral side of the epithelial cells does not involve infection of the cells themselves. The protein is Envelope glycoprotein gp160 (env) of Human immunodeficiency virus type 2 subtype A (isolate KR) (HIV-2).